Here is a 437-residue protein sequence, read N- to C-terminus: Probable E3 ubiquitin-protein ligase TRIML2 (437 aa).

The B box-type zinc-finger motif lies at 14 to 55 (TEDAYCETHLEPTRLFCDVDQITLCSKCFQSQEHKHHMVCGI). The Zn(2+) site is built by C19, H22, C41, and H47. Residues 55 to 200 (IQEAAENYRK…IVELEKKCGE (146 aa)) are a coiled coil. Positions 231–429 (DLSLCHIRGL…DSLTILQHGP (199 aa)) constitute a B30.2/SPRY domain.

It carries out the reaction S-ubiquitinyl-[E2 ubiquitin-conjugating enzyme]-L-cysteine + [acceptor protein]-L-lysine = [E2 ubiquitin-conjugating enzyme]-L-cysteine + N(6)-ubiquitinyl-[acceptor protein]-L-lysine.. The protein operates within protein modification; protein ubiquitination. This Homo sapiens (Human) protein is Probable E3 ubiquitin-protein ligase TRIML2.